We begin with the raw amino-acid sequence, 92 residues long: Small ribosomal subunit protein uS15c (92 aa).

This sequence belongs to the universal ribosomal protein uS15 family. As to quaternary structure, part of the 30S ribosomal subunit.

The protein resides in the plastid. It localises to the chloroplast. This chain is Small ribosomal subunit protein uS15c (rps15-A), found in Lemna minor (Common duckweed).